Here is a 425-residue protein sequence, read N- to C-terminus: Adenylosuccinate synthetase (425 aa).

GTP is bound by residues 12–18 (GDEGKGK) and 40–42 (GHT). The Proton acceptor role is filled by D13. Mg(2+)-binding residues include D13 and G40. IMP contacts are provided by residues 13-16 (DEGK), 38-41 (NAGH), T127, R141, Q222, T237, and R301. H41 (proton donor) is an active-site residue. 297 to 303 (AVTGRPR) is a binding site for substrate. Residues R303, 329 to 331 (KID), and 411 to 413 (SVG) contribute to the GTP site.

Belongs to the adenylosuccinate synthetase family. As to quaternary structure, homodimer. Requires Mg(2+) as cofactor.

It is found in the cytoplasm. The enzyme catalyses IMP + L-aspartate + GTP = N(6)-(1,2-dicarboxyethyl)-AMP + GDP + phosphate + 2 H(+). Its pathway is purine metabolism; AMP biosynthesis via de novo pathway; AMP from IMP: step 1/2. Plays an important role in the de novo pathway of purine nucleotide biosynthesis. Catalyzes the first committed step in the biosynthesis of AMP from IMP. The polypeptide is Adenylosuccinate synthetase (Fusobacterium nucleatum).